Here is a 70-residue protein sequence, read N- to C-terminus: U-scutigerotoxin(02)-Tl1a (70 aa).

The first 17 residues, 1–17, serve as a signal peptide directing secretion; sequence MKYILLGLLLMVVLANA.

It belongs to the scutigerotoxin-02 family. Post-translationally, contains 4 disulfide bonds. In terms of tissue distribution, expressed by the venom gland.

The protein resides in the secreted. This is U-scutigerotoxin(02)-Tl1a from Thereuopoda longicornis (Long-legged centipede).